The following is a 246-amino-acid chain: MQIDLNADLGEGCGNDEALLALISSANVACGWHAGDAATMLQTVKWAIEKGVAIGAHPSFPDRENFGRTEMQRDPEAVYADVLYQIGALAAMVRAQGGQLHHVKPHGALYNQAARDPALAEAIVRAVRDFDSDLIFFGLAGSKMIDVARKAGLRVKEEVFADRGYNADGSLVKRGTPGALHEDEEVALNQTLTMVREQRVRAIDGNWVPIRAETVCLHGDGDHALAFARRIRERLGAEGIAVRAGA.

This sequence belongs to the LamB/PxpA family. In terms of assembly, forms a complex composed of PxpA, PxpB and PxpC.

It catalyses the reaction 5-oxo-L-proline + ATP + 2 H2O = L-glutamate + ADP + phosphate + H(+). Catalyzes the cleavage of 5-oxoproline to form L-glutamate coupled to the hydrolysis of ATP to ADP and inorganic phosphate. This chain is 5-oxoprolinase subunit A, found in Cupriavidus pinatubonensis (strain JMP 134 / LMG 1197) (Cupriavidus necator (strain JMP 134)).